A 649-amino-acid polypeptide reads, in one-letter code: Echinoderm microtubule-associated protein-like 2 (649 aa).

The tract at residues 10-649 (KEVIFSMEEG…DTSVLQWRVA (640 aa)) is tandem atypical propeller in EMLs. WD repeat units follow at residues 56 to 93 (KLDW…LYSV), 97 to 144 (RQRH…VWDS), 151 to 192 (HVLG…VWDW), 195 to 234 (ESKV…FWSL), 241 to 280 (KRQG…VWGK), 285 to 323 (ITQE…LWGS), 369 to 406 (FSLL…LWSS), 410 to 447 (QPVW…LLDT), 452 to 489 (LVAI…VYTV), 495 to 535 (KVSR…YWDA), 564 to 602 (FGIW…LFSY), and 609 to 648 (ALSH…QWRV).

The protein belongs to the WD repeat EMAP family. Interacts with GRID2 and may also interact with GRID1. Interacts with EML3. Binds unpolymerized tubulins via its WD repeat region. Widely expressed in both brain and peripheral tissues, including brainstem and enrichment in the postsynaptic density, PSD.

Its subcellular location is the cytoplasm. It is found in the cytoskeleton. The protein localises to the spindle. Functionally, tubulin binding protein that inhibits microtubule nucleation and growth, resulting in shorter microtubules. This chain is Echinoderm microtubule-associated protein-like 2 (Eml2), found in Rattus norvegicus (Rat).